Reading from the N-terminus, the 253-residue chain is U2 small nuclear ribonucleoprotein A' (253 aa).

LRR repeat units follow at residues 19–40 (KDRE…GIAK), 41–62 (DQDA…PFFP), 63–84 (RLHT…IAST), and 87–108 (NLTT…DPLR). The LRRCT domain occupies 121-159 (NPVTRKEHYRYWVIWRIPSVRFLDYQKVKDAERAKAKEL). Residues 228–253 (ELNEGRIPGGALDAGEDSEDENQMQT) are disordered. Over residues 241–253 (AGEDSEDENQMQT) the composition is skewed to acidic residues.

Belongs to the U2 small nuclear ribonucleoprotein A family. Associated with the spliceosome.

Its subcellular location is the nucleus. Involved in pre-mRNA splicing. The protein is U2 small nuclear ribonucleoprotein A' (lea1) of Aspergillus fumigatus (strain ATCC MYA-4609 / CBS 101355 / FGSC A1100 / Af293) (Neosartorya fumigata).